A 325-amino-acid polypeptide reads, in one-letter code: Lipid droplet-associated hydrolase (325 aa).

S139 (nucleophile) is an active-site residue. Residues D271 and H300 each act as charge relay system in the active site.

It belongs to the AB hydrolase superfamily. LDAH family. In terms of tissue distribution, present in macrophage-rich areas in atherosclerotic lesions (at protein level). Expressed in monocytes and monocyte-derived macrophages (at protein level).

It localises to the lipid droplet. The protein localises to the endoplasmic reticulum. The catalysed reaction is a cholesterol ester + H2O = cholesterol + a fatty acid + H(+). In terms of biological role, probable serine lipid hydrolase associated with lipid droplets. Has low cholesterol esterase activity. Appears to lack triglyceride lipase activity. Involved in cholesterol and triglyceride homeostasis; has opposing effects, stimulating cellular triglyceride accumulation and cellular cholesterol release. Acts antagonistically with PNPLA2/ATGL in regulation of cellular lipid stores. May regulate triglyceride accumulation indirectly through stimulation of PNPLA2/ATGL ubiquitination and proteasomal degradation. Promotes microtubule-dependent lipid droplet fusion. Highly expressed in macrophage-rich areas in atherosclerotic lesions, suggesting that it could promote cholesterol ester turnover in macrophages. The chain is Lipid droplet-associated hydrolase from Homo sapiens (Human).